Reading from the N-terminus, the 256-residue chain is Tumor necrosis factor receptor superfamily member 9 (256 aa).

An N-terminal signal peptide occupies residues 1–23 (MGNNCYNVVVIVLLLVGCEKVGA). TNFR-Cys repeat units lie at residues 24-45 (VQNSCDNCQPGTFCRKYNPVCK), 46-85 (SCPPSTFSSIGGQPNCNICRVCAGYFRFKKFCSSTHNAEC), 86-117 (ECIEGFHCLGPQCTRCEKDCRPGQELTKQGCK), and 118-159 (TCSL…VVCG). Residues 24–187 (VQNSCDNCQP…GPGGHSLQVL (164 aa)) are Extracellular-facing. 9 disulfide bridges follow: cysteine 28-cysteine 37, cysteine 31-cysteine 44, cysteine 47-cysteine 61, cysteine 64-cysteine 77, cysteine 67-cysteine 85, cysteine 87-cysteine 93, cysteine 98-cysteine 105, cysteine 101-cysteine 116, and cysteine 119-cysteine 133. Residues asparagine 128 and asparagine 138 are each glycosylated (N-linked (GlcNAc...) asparagine). A disulfide bond links cysteine 139 and cysteine 158. Residues 188 to 208 (TLFLALTSALLLALIFITLLF) traverse the membrane as a helical segment. At 209 to 256 (SVLKWIRKKFPHIFKQPFKKTTGAAQEEDACSCRCPQEEEGGGGGYEL) the chain is on the cytoplasmic side.

As to quaternary structure, predominantly homodimeric, but may also exist as a monomer. Associates with p56-LCK. Interacts with TRAF1, TRAF2 and TRAF3. Expressed in activated thymocytes, splenic T cells, CD4(+), and CD8(+) T-cells.

It localises to the cell membrane. Functionally, receptor for TNFSF9/4-1BBL. Conveys a signal that enhances CD8(+) T-cell survival, cytotoxicity, and mitochondrial activity, thereby promoting immunity against viruses and tumors. The sequence is that of Tumor necrosis factor receptor superfamily member 9 (Tnfrsf9) from Mus musculus (Mouse).